A 589-amino-acid chain; its full sequence is Probable translation initiation factor IF-2 (589 aa).

The tr-type G domain occupies 3–224 (VRSPFVVVMG…AGVSQRFIPR (222 aa)). The tract at residues 12-19 (GHVDVGKT) is G1. Residue 12-19 (GHVDVGKT) participates in GTP binding. The interval 37–41 (MITQH) is G2. Residues 78–81 (DTPG) form a G3 region. GTP contacts are provided by residues 78-82 (DTPGH) and 132-135 (NKLD). The interval 132–135 (NKLD) is G4. A G5 region spans residues 200 to 202 (SAV).

The protein belongs to the TRAFAC class translation factor GTPase superfamily. Classic translation factor GTPase family. IF-2 subfamily.

Its function is as follows. Function in general translation initiation by promoting the binding of the formylmethionine-tRNA to ribosomes. Seems to function along with eIF-2. The polypeptide is Probable translation initiation factor IF-2 (Pyrobaculum neutrophilum (strain DSM 2338 / JCM 9278 / NBRC 100436 / V24Sta) (Thermoproteus neutrophilus)).